Reading from the N-terminus, the 489-residue chain is Rhamnulokinase (489 aa).

Residue 13–17 (ASSGR) coordinates ATP. C68 and C222 form a disulfide bridge. Substrate is bound by residues G83 and 236–238 (HDT). D237 serves as the catalytic Proton acceptor. T259 provides a ligand contact to ATP. Residue N296 participates in substrate binding. Q304 provides a ligand contact to ATP. A disulfide bridge connects residues C353 and C370. G402 provides a ligand contact to ATP. A disulfide bridge links C413 with C417.

Belongs to the rhamnulokinase family. The cofactor is Mg(2+).

It carries out the reaction L-rhamnulose + ATP = L-rhamnulose 1-phosphate + ADP + H(+). Its pathway is carbohydrate degradation; L-rhamnose degradation; glycerone phosphate from L-rhamnose: step 2/3. In terms of biological role, involved in the catabolism of L-rhamnose (6-deoxy-L-mannose). Catalyzes the transfer of the gamma-phosphate group from ATP to the 1-hydroxyl group of L-rhamnulose to yield L-rhamnulose 1-phosphate. This is Rhamnulokinase from Shigella sonnei (strain Ss046).